The chain runs to 101 residues: Movement protein (101 aa).

The chain crosses the membrane as a helical span at residues Glu30 to Leu50. A disordered region spans residues Val75–Gly101.

The protein belongs to the mastrevirus movement protein family. As to quaternary structure, interacts with the capsid protein (CP). Part of a MP-CP-viral DNA complex.

It is found in the host membrane. Involved in the viral transport within, and between cells. The chain is Movement protein from Maize streak virus genotype A (isolate South Africa) (MSV).